The primary structure comprises 179 residues: Inosine/xanthosine triphosphatase (179 aa).

Residues 8–13 (TTNPAK) and 68–69 (EA) contribute to the substrate site. Residue Glu-68 coordinates Mg(2+).

It belongs to the YjjX NTPase family. As to quaternary structure, homodimer. Requires Mg(2+) as cofactor. The cofactor is Mn(2+).

It carries out the reaction XTP + H2O = XDP + phosphate + H(+). The catalysed reaction is ITP + H2O = IDP + phosphate + H(+). Functionally, phosphatase that hydrolyzes non-canonical purine nucleotides such as XTP and ITP to their respective diphosphate derivatives. Probably excludes non-canonical purines from DNA/RNA precursor pool, thus preventing their incorporation into DNA/RNA and avoiding chromosomal lesions. This chain is Inosine/xanthosine triphosphatase, found in Serratia proteamaculans (strain 568).